A 35-amino-acid polypeptide reads, in one-letter code: Potassium channel toxin alpha-KTx 6.12 (35 aa).

The residue at position 1 (Gln-1) is a Pyrrolidone carboxylic acid. 4 disulfide bridges follow: Cys-4/Cys-24, Cys-10/Cys-29, Cys-14/Cys-31, and Cys-19/Cys-34. The residue at position 35 (Lys-35) is a Lysine amide.

The protein belongs to the short scorpion toxin superfamily. Potassium channel inhibitor family. Alpha-KTx 06 subfamily. In terms of assembly, monomer. Expressed by the venom gland.

It localises to the secreted. Functionally, high affinity blocker of Kv1.3/KCNA3 channels of human T cells. Blocks Kv1.2/KCNA2 with an order of magnitude smaller than for Kv1.3/KCNA3. This chain is Potassium channel toxin alpha-KTx 6.12, found in Anuroctonus phaiodactylus (Mafia scorpion).